Here is a 225-residue protein sequence, read N- to C-terminus: Phosphoserine phosphatase (225 aa).

Met1 carries the post-translational modification N-acetylmethionine. The Nucleophile role is filled by Asp20. Asp20 and Asp22 together coordinate Mg(2+). Asp20–Asp22 contacts L-serine. Catalysis depends on Asp22, which acts as the Proton donor. Met52 lines the O-phospho-L-serine pocket. A phosphate-binding site is contributed by Gly53. Residues Ser109–Gly111 and Lys158 each bind L-serine. O-phospho-L-serine-binding positions include Ser109–Gly111 and Lys158. Asp179 contributes to the Mg(2+) binding site. Thr182 lines the O-phospho-L-serine pocket. Thr182 contacts phosphate.

Belongs to the HAD-like hydrolase superfamily. SerB family. As to quaternary structure, homodimer. It depends on Mg(2+) as a cofactor.

It localises to the cytoplasm. It is found in the cytosol. It carries out the reaction O-phospho-L-serine + H2O = L-serine + phosphate. The enzyme catalyses O-phospho-D-serine + H2O = D-serine + phosphate. It functions in the pathway amino-acid biosynthesis; L-serine biosynthesis; L-serine from 3-phospho-D-glycerate: step 3/3. Inhibited by calcium ions. Catalyzes the last irreversible step in the biosynthesis of L-serine from carbohydrates, the dephosphorylation of O-phospho-L-serine to L-serine. L-serine can then be used in protein synthesis, to produce other amino acids, in nucleotide metabolism or in glutathione synthesis, or can be racemized to D-serine, a neuromodulator. May also act on O-phospho-D-serine. The polypeptide is Phosphoserine phosphatase (Homo sapiens (Human)).